The sequence spans 340 residues: NADH-quinone oxidoreductase subunit H (340 aa).

Transmembrane regions (helical) follow at residues 9–29 (IWII…VAFI), 81–101 (LIAP…IPFA), 113–133 (LLFL…AGWA), 158–178 (GFAL…GIVL), 184–204 (LWHW…ITAV), 221–240 (IVAG…FFLA), 245–264 (MVLV…LSPF), 273–293 (LFAW…FIFT), and 316–336 (VLIP…EFHW).

This sequence belongs to the complex I subunit 1 family. In terms of assembly, NDH-1 is composed of 14 different subunits. Subunits NuoA, H, J, K, L, M, N constitute the membrane sector of the complex.

It is found in the cell inner membrane. It carries out the reaction a quinone + NADH + 5 H(+)(in) = a quinol + NAD(+) + 4 H(+)(out). Its function is as follows. NDH-1 shuttles electrons from NADH, via FMN and iron-sulfur (Fe-S) centers, to quinones in the respiratory chain. The immediate electron acceptor for the enzyme in this species is believed to be ubiquinone. Couples the redox reaction to proton translocation (for every two electrons transferred, four hydrogen ions are translocated across the cytoplasmic membrane), and thus conserves the redox energy in a proton gradient. This subunit may bind ubiquinone. The sequence is that of NADH-quinone oxidoreductase subunit H from Coxiella burnetii (strain CbuK_Q154) (Coxiella burnetii (strain Q154)).